Reading from the N-terminus, the 330-residue chain is Glycerol-3-phosphate dehydrogenase [NAD(P)+] (330 aa).

Residues S10, W11, R31, and K104 each contribute to the NADPH site. Residues K104, G131, and S133 each contribute to the sn-glycerol 3-phosphate site. A135 contacts NADPH. Sn-glycerol 3-phosphate contacts are provided by K186, D239, S249, R250, and N251. The active-site Proton acceptor is K186. Residue R250 coordinates NADPH. The NADPH site is built by V274 and E276.

This sequence belongs to the NAD-dependent glycerol-3-phosphate dehydrogenase family.

Its subcellular location is the cytoplasm. It carries out the reaction sn-glycerol 3-phosphate + NAD(+) = dihydroxyacetone phosphate + NADH + H(+). The catalysed reaction is sn-glycerol 3-phosphate + NADP(+) = dihydroxyacetone phosphate + NADPH + H(+). The protein operates within membrane lipid metabolism; glycerophospholipid metabolism. Catalyzes the reduction of the glycolytic intermediate dihydroxyacetone phosphate (DHAP) to sn-glycerol 3-phosphate (G3P), the key precursor for phospholipid synthesis. In Thermoanaerobacter sp. (strain X514), this protein is Glycerol-3-phosphate dehydrogenase [NAD(P)+].